Reading from the N-terminus, the 263-residue chain is Tryptophan synthase alpha chain (263 aa).

Residues Glu49 and Asp60 each act as proton acceptor in the active site.

It belongs to the TrpA family. In terms of assembly, tetramer of two alpha and two beta chains.

It carries out the reaction (1S,2R)-1-C-(indol-3-yl)glycerol 3-phosphate + L-serine = D-glyceraldehyde 3-phosphate + L-tryptophan + H2O. It functions in the pathway amino-acid biosynthesis; L-tryptophan biosynthesis; L-tryptophan from chorismate: step 5/5. Functionally, the alpha subunit is responsible for the aldol cleavage of indoleglycerol phosphate to indole and glyceraldehyde 3-phosphate. The polypeptide is Tryptophan synthase alpha chain (Clostridium kluyveri (strain NBRC 12016)).